Reading from the N-terminus, the 158-residue chain is 6,7-dimethyl-8-ribityllumazine synthase (158 aa).

5-amino-6-(D-ribitylamino)uracil-binding positions include Phe24, 58–60 (AFE), and 82–84 (AVI). Position 87-88 (87-88 (GT)) interacts with (2S)-2-hydroxy-3-oxobutyl phosphate. The active-site Proton donor is the His90. Residue Phe115 coordinates 5-amino-6-(D-ribitylamino)uracil. Arg129 is a binding site for (2S)-2-hydroxy-3-oxobutyl phosphate.

This sequence belongs to the DMRL synthase family. As to quaternary structure, forms an icosahedral capsid composed of 60 subunits, arranged as a dodecamer of pentamers.

The enzyme catalyses (2S)-2-hydroxy-3-oxobutyl phosphate + 5-amino-6-(D-ribitylamino)uracil = 6,7-dimethyl-8-(1-D-ribityl)lumazine + phosphate + 2 H2O + H(+). It participates in cofactor biosynthesis; riboflavin biosynthesis; riboflavin from 2-hydroxy-3-oxobutyl phosphate and 5-amino-6-(D-ribitylamino)uracil: step 1/2. In terms of biological role, catalyzes the formation of 6,7-dimethyl-8-ribityllumazine by condensation of 5-amino-6-(D-ribitylamino)uracil with 3,4-dihydroxy-2-butanone 4-phosphate. This is the penultimate step in the biosynthesis of riboflavin. This Stutzerimonas stutzeri (strain A1501) (Pseudomonas stutzeri) protein is 6,7-dimethyl-8-ribityllumazine synthase.